A 266-amino-acid chain; its full sequence is Tryptophan synthase alpha chain (266 aa).

Catalysis depends on proton acceptor residues E46 and D57.

This sequence belongs to the TrpA family. As to quaternary structure, tetramer of two alpha and two beta chains.

The enzyme catalyses (1S,2R)-1-C-(indol-3-yl)glycerol 3-phosphate + L-serine = D-glyceraldehyde 3-phosphate + L-tryptophan + H2O. Its pathway is amino-acid biosynthesis; L-tryptophan biosynthesis; L-tryptophan from chorismate: step 5/5. Its function is as follows. The alpha subunit is responsible for the aldol cleavage of indoleglycerol phosphate to indole and glyceraldehyde 3-phosphate. This Lacticaseibacillus casei (Lactobacillus casei) protein is Tryptophan synthase alpha chain.